The sequence spans 664 residues: Delta-like protein C (664 aa).

A signal peptide spans M1–S20. Over S21–L511 the chain is Extracellular. In terms of domain architecture, DSL spans V154 to C198. Cystine bridges form between C156-C165, C169-C181, C189-C198, C203-C214, C207-C220, C222-C231, C234-C245, C240-C251, C253-C262, C269-C281, C275-C291, C293-C302, C309-C320, C314-C329, C331-C340, C347-C358, C352-C368, C370-C379, C386-C397, C391-C406, C408-C417, C424-C435, C429-C444, C446-C455, C462-C473, C467-C482, and C484-C493. A glycan (N-linked (GlcNAc...) asparagine) is linked at N173. EGF-like domains are found at residues T199–D232, E233–N263, and D265–E303. In terms of domain architecture, EGF-like 4; calcium-binding spans E305–E341. 2 consecutive EGF-like domains span residues S343 to E380 and K382 to E418. Residues N420 to R456 enclose the EGF-like 7; calcium-binding domain. Residues R458 to E494 form the EGF-like 8 domain. The helical transmembrane segment at I512–V532 threads the bilayer. Over L533–V664 the chain is Cytoplasmic.

Ubiquitinated by mib, leading to its endocytosis and subsequent degradation. In terms of tissue distribution, strongly expressed in the early retina, where it precedes other delta proteins. Also expressed in cranial ganglia, in sensory epithelia including ear and lateral line and in scattered epidermal cells. In the mesoderm, expression is visible by 50% epiboly; it is expressed subsequently in the tail bud, in stripes in the presomitic mesoderm and in the posterior half of each somite. Also expressed in notochord, blood vessels and pronephros. In contrast to other delta proteins, it is not expressed in the majority of nascent primary neurons. In somites, it marks the posterior part of each formed somite, while deltaD (dld) marks the anterior part.

The protein resides in the membrane. Functionally, acts as a ligand for Notch receptors and is involved in somitogenesis. Can activate Notch receptors. Required in somite segmentation to keep the oscillations of neighboring presomitic mesoderm cells synchronized. This chain is Delta-like protein C (dlc), found in Danio rerio (Zebrafish).